The following is a 957-amino-acid chain: MDLKKTVNLLDTPFPMRGDLARREPGWLAQWQAQQRYQKLRKIAAGRPKFILHDGPPYANGDIHIGHAVNKILKDIIVRSKTQAGFDAPYVPGWDCHGLPIEHQIEKLVKGDKKAIEAAPSIHARITEYRKANGLDAKATDLPASFIRELCREYAGLQVERQKKDFIRLGVLGEWDNPYRTMSFRSEADEIRALGKLYQQGYLFKGLKPVYWCFDCGSALAEAEVEYQDKTSPTIDVAFASAEPEKLAAAFGLSALPAGKTASAVIWTTTPWTIPANQALNVHPDFDYGLYDTEKGLLILAADLAKGALERFGLTGVEVARCKGQALDRLTFRHPFYDRVSPVYVGDYVTLDAGTGIVHSAPAYGLEDFDSCRKNGMPNDAILNPVTSDGTYVDSLPFFGGLHIWKANPLIVEKLAEVGALMHTSPLSHSYPHCWRHKTPVVYRATTQWFVGMDREVAGSTLRQRALKGVDDTAFFPAWGQARLHAMIANRPDWCVSRQRNWGVPIPFFLDKQTGEPHPRTPELLEAVARKVEEQGINAWFELDPAELLGEDAARFDKMKDTLDVWFDSGTTHFHVLRGTHAEQLAYPADLYLEGSDQHRGWFHSSLLTGCALDGRAPYNQLLTHGFVVDGQGRKMSKSVGNVIAPQKINDSLGADILRLWVASTDYSGELAISDTILKGTTDSYRRLRNTIRFLLANLSDFNPATDALPVSELTELDRYALVLAQRLHAGVAEDCYPRYAFHTAMQAIVGYCTDDLGAFWLDIIKDRLYTTKADSKARRSAQTALWHVTRSLLSLLAPVLCFTADEAWQALTGEAEDSPVYHTWHELPVVADAEALAARWDVLRALRAQINKDIETLREAGAVGSSLQAEVDIEADAGLYPLLNALGDELKFVLIVSRVGVVPGPETRIRVSASGEQKCERCWHYHPTVGENAEAPTLCARCYDNIFGQGESRSYA.

Residues 57-67 (PYANGDIHIGH) carry the 'HIGH' region motif. An L-isoleucyl-5'-AMP-binding site is contributed by Glu-594. Residues 635–639 (KMSKS) carry the 'KMSKS' region motif. ATP is bound at residue Lys-638. 4 residues coordinate Zn(2+): Cys-920, Cys-923, Cys-940, and Cys-943.

Belongs to the class-I aminoacyl-tRNA synthetase family. IleS type 1 subfamily. As to quaternary structure, monomer. Zn(2+) serves as cofactor.

Its subcellular location is the cytoplasm. It catalyses the reaction tRNA(Ile) + L-isoleucine + ATP = L-isoleucyl-tRNA(Ile) + AMP + diphosphate. Catalyzes the attachment of isoleucine to tRNA(Ile). As IleRS can inadvertently accommodate and process structurally similar amino acids such as valine, to avoid such errors it has two additional distinct tRNA(Ile)-dependent editing activities. One activity is designated as 'pretransfer' editing and involves the hydrolysis of activated Val-AMP. The other activity is designated 'posttransfer' editing and involves deacylation of mischarged Val-tRNA(Ile). The sequence is that of Isoleucine--tRNA ligase from Laribacter hongkongensis (strain HLHK9).